The following is a 61-amino-acid chain: MNETTPAFDRHMLEALVCPVTQTVLEYDAEAQELVSRAANLAFPIRNGIPVMLTDEARPLE.

It belongs to the UPF0434 family.

This Ruegeria sp. (strain TM1040) (Silicibacter sp.) protein is UPF0434 protein TM1040_0056.